The chain runs to 320 residues: Cytochrome f (320 aa).

The signal sequence occupies residues 1-32 (MKTKKSYDKVTRWVTPPILMLIIIHIITGACS). The heme site is built by Tyr-36, Cys-56, Cys-59, and His-60. Residues 286-306 (IQGLLGFLASVVLAQIFLVLK) form a helical membrane-spanning segment.

This sequence belongs to the cytochrome f family. The 4 large subunits of the cytochrome b6-f complex are cytochrome b6, subunit IV (17 kDa polypeptide, petD), cytochrome f and the Rieske protein, while the 4 small subunits are PetG, PetL, PetM and PetN. The complex functions as a dimer. The cofactor is heme.

The protein resides in the plastid. It localises to the chloroplast thylakoid membrane. Component of the cytochrome b6-f complex, which mediates electron transfer between photosystem II (PSII) and photosystem I (PSI), cyclic electron flow around PSI, and state transitions. This is Cytochrome f from Gnetum parvifolium (Small-leaved jointfir).